A 640-amino-acid chain; its full sequence is Threonine--tRNA ligase (640 aa).

Positions 1–61 (MPIITLPDGS…DHDATLQIIT (61 aa)) constitute a TGS domain. Residues 242-533 (DHRKLGKRLD…LIEHYEGAFP (292 aa)) form a catalytic region. Cys333, His384, and His510 together coordinate Zn(2+).

It belongs to the class-II aminoacyl-tRNA synthetase family. Homodimer. Zn(2+) is required as a cofactor.

Its subcellular location is the cytoplasm. The enzyme catalyses tRNA(Thr) + L-threonine + ATP = L-threonyl-tRNA(Thr) + AMP + diphosphate + H(+). Catalyzes the attachment of threonine to tRNA(Thr) in a two-step reaction: L-threonine is first activated by ATP to form Thr-AMP and then transferred to the acceptor end of tRNA(Thr). Also edits incorrectly charged L-seryl-tRNA(Thr). This is Threonine--tRNA ligase from Azotobacter vinelandii (strain DJ / ATCC BAA-1303).